A 418-amino-acid chain; its full sequence is NADH-quinone oxidoreductase subunit D (418 aa).

Belongs to the complex I 49 kDa subunit family. NDH-1 is composed of 14 different subunits. Subunits NuoB, C, D, E, F, and G constitute the peripheral sector of the complex.

The protein resides in the cell inner membrane. The catalysed reaction is a quinone + NADH + 5 H(+)(in) = a quinol + NAD(+) + 4 H(+)(out). NDH-1 shuttles electrons from NADH, via FMN and iron-sulfur (Fe-S) centers, to quinones in the respiratory chain. The immediate electron acceptor for the enzyme in this species is believed to be ubiquinone. Couples the redox reaction to proton translocation (for every two electrons transferred, four hydrogen ions are translocated across the cytoplasmic membrane), and thus conserves the redox energy in a proton gradient. In Bordetella bronchiseptica (strain ATCC BAA-588 / NCTC 13252 / RB50) (Alcaligenes bronchisepticus), this protein is NADH-quinone oxidoreductase subunit D.